The sequence spans 862 residues: Ubiquitin carboxyl-terminal hydrolase 13 (862 aa).

The UBP-type; degenerate zinc-finger motif lies at 182–290; sequence QASKHAKSLV…KHLAHFGIDM (109 aa). Zn(2+) contacts are provided by Cys-206, Cys-209, Cys-226, and His-239. In terms of domain architecture, USP spans 331–860; the sequence is TGMKNLGNSC…LGYIYFYHRI (530 aa). Cys-340 acts as the Nucleophile in catalysis. UBA domains lie at 647-688 and 722-762; these read DIDE…IIAH and QPPE…IFSH. His-822 (proton acceptor) is an active-site residue.

The protein belongs to the peptidase C19 family.

The catalysed reaction is Thiol-dependent hydrolysis of ester, thioester, amide, peptide and isopeptide bonds formed by the C-terminal Gly of ubiquitin (a 76-residue protein attached to proteins as an intracellular targeting signal).. Specifically inhibited by spautin-1 (specific and potent autophagy inhibitor-1), a derivative of MBCQ that binds to USP13 and inhibits deubiquitinase activity. Functionally, deubiquitinase that mediates deubiquitination of target proteins and is involved in various processes such as autophagy and endoplasmic reticulum-associated degradation (ERAD). The chain is Ubiquitin carboxyl-terminal hydrolase 13 (USP13) from Gallus gallus (Chicken).